The primary structure comprises 317 residues: Ribosomal protein L11 methyltransferase (317 aa).

S-adenosyl-L-methionine contacts are provided by T139, G162, D184, and N226. Residues 274-297 are disordered; that stretch reads EHVATRPDPASPGGDRRAGRGDAG.

Belongs to the methyltransferase superfamily. PrmA family.

The protein resides in the cytoplasm. It catalyses the reaction L-lysyl-[protein] + 3 S-adenosyl-L-methionine = N(6),N(6),N(6)-trimethyl-L-lysyl-[protein] + 3 S-adenosyl-L-homocysteine + 3 H(+). Its function is as follows. Methylates ribosomal protein L11. This Sorangium cellulosum (strain So ce56) (Polyangium cellulosum (strain So ce56)) protein is Ribosomal protein L11 methyltransferase.